A 581-amino-acid chain; its full sequence is Arginine--tRNA ligase (581 aa).

Residues 126–136 (PNLAKEMHVGH) carry the 'HIGH' region motif.

It belongs to the class-I aminoacyl-tRNA synthetase family. As to quaternary structure, monomer.

The protein localises to the cytoplasm. The catalysed reaction is tRNA(Arg) + L-arginine + ATP = L-arginyl-tRNA(Arg) + AMP + diphosphate. The sequence is that of Arginine--tRNA ligase from Shewanella putrefaciens (strain CN-32 / ATCC BAA-453).